Here is a 551-residue protein sequence, read N- to C-terminus: Palmdelphin (551 aa).

At Met-1 the chain carries N-acetylmethionine. A coiled-coil region spans residues 12–106 (QAITDKRKIQ…LQISANEEAI (95 aa)). Residue Lys-125 forms a Glycyl lysine isopeptide (Lys-Gly) (interchain with G-Cter in SUMO2) linkage. Ser-135 carries the post-translational modification Phosphoserine. Lys-178 participates in a covalent cross-link: Glycyl lysine isopeptide (Lys-Gly) (interchain with G-Cter in SUMO1); alternate. A Glycyl lysine isopeptide (Lys-Gly) (interchain with G-Cter in SUMO2); alternate cross-link involves residue Lys-178. Over residues 247–258 (ERNSKSPTEYHE) the composition is skewed to basic and acidic residues. The tract at residues 247-266 (ERNSKSPTEYHEPVYANPFC) is disordered. Thr-270 carries the post-translational modification Phosphothreonine. 2 disordered regions span residues 294 to 390 (LGNH…TCQE) and 451 to 533 (AEDN…GTED). Phosphoserine occurs at positions 321 and 349. The span at 341-353 (HTQQKRMASPWEE) shows a compositional bias: polar residues. The span at 354–365 (SSNRQNEHEVSP) shows a compositional bias: basic and acidic residues. 7 positions are modified to phosphoserine: Ser-370, Ser-375, Ser-384, Ser-385, Ser-498, Ser-515, and Ser-520.

The protein belongs to the paralemmin family. As to quaternary structure, interacts with GLUL. In terms of processing, phosphorylated. As to expression, ubiquitous. Expressed at highest levels in the heart and lung.

The protein resides in the cytoplasm. It localises to the cell projection. Its subcellular location is the dendrite. It is found in the dendritic spine. The sequence is that of Palmdelphin (Palmd) from Mus musculus (Mouse).